A 327-amino-acid polypeptide reads, in one-letter code: 2-keto-3-deoxygluconate permease (327 aa).

Helical transmembrane passes span 10 to 30 (IPGG…TFSP), 42 to 62 (GMIT…GASI), 73 to 93 (KSGT…AIAS), 95 to 115 (IIPE…LALV), 139 to 159 (AGAF…IILG), 163 to 183 (IASF…VGFA), 199 to 219 (VQTL…LTVI), 224 to 244 (LLGI…LIIA), 254 to 274 (TAGI…VLIA), and 289 to 309 (SLVA…TSIW).

It belongs to the KdgT transporter family.

The protein localises to the cell inner membrane. It carries out the reaction 2-dehydro-3-deoxy-D-gluconate(in) + H(+)(in) = 2-dehydro-3-deoxy-D-gluconate(out) + H(+)(out). Its function is as follows. Catalyzes the proton-dependent uptake of 2-keto-3-deoxygluconate (KDG) into the cell. This Escherichia coli O7:K1 (strain IAI39 / ExPEC) protein is 2-keto-3-deoxygluconate permease.